The chain runs to 338 residues: Ornithine carbamoyltransferase, catabolic (338 aa).

Residues 65–68, glutamine 92, arginine 116, and 143–146 contribute to the carbamoyl phosphate site; these read STRT and HPTQ. Residues asparagine 175, aspartate 239, and 243–244 each bind L-ornithine; that span reads SM. Residues 280–281 and arginine 325 each bind carbamoyl phosphate; that span reads CL.

Belongs to the aspartate/ornithine carbamoyltransferase superfamily. OTCase family.

The protein localises to the cytoplasm. The catalysed reaction is carbamoyl phosphate + L-ornithine = L-citrulline + phosphate + H(+). It participates in amino-acid degradation; L-arginine degradation via ADI pathway; carbamoyl phosphate from L-arginine: step 2/2. Functionally, reversibly catalyzes the transfer of the carbamoyl group from carbamoyl phosphate (CP) to the N(epsilon) atom of ornithine (ORN) to produce L-citrulline. The sequence is that of Ornithine carbamoyltransferase, catabolic from Treponema denticola (strain ATCC 35405 / DSM 14222 / CIP 103919 / JCM 8153 / KCTC 15104).